We begin with the raw amino-acid sequence, 174 residues long: Ribosome maturation factor RimM (174 aa).

The region spanning 98 to 171 (EDEFYFHEII…KIKIHVMEGL (74 aa)) is the PRC barrel domain.

It belongs to the RimM family. As to quaternary structure, binds ribosomal protein uS19.

It localises to the cytoplasm. Functionally, an accessory protein needed during the final step in the assembly of 30S ribosomal subunit, possibly for assembly of the head region. Essential for efficient processing of 16S rRNA. May be needed both before and after RbfA during the maturation of 16S rRNA. It has affinity for free ribosomal 30S subunits but not for 70S ribosomes. The protein is Ribosome maturation factor RimM of Bacillus velezensis (strain DSM 23117 / BGSC 10A6 / LMG 26770 / FZB42) (Bacillus amyloliquefaciens subsp. plantarum).